The sequence spans 219 residues: Small ribosomal subunit protein uS3c (219 aa).

Residues 39 to 109 (IRQYIEKNLS…QIRINVIEVK (71 aa)) enclose the KH type-2 domain.

Belongs to the universal ribosomal protein uS3 family. As to quaternary structure, part of the 30S ribosomal subunit.

It localises to the plastid. The protein resides in the cyanelle. In Cyanophora paradoxa, this protein is Small ribosomal subunit protein uS3c (rps3).